A 320-amino-acid polypeptide reads, in one-letter code: Atrochrysone carboxyl ACP thioesterase (320 aa).

Residues His103, His105, Asp107, and His108 each coordinate Zn(2+). Asp107 serves as the catalytic Proton donor/acceptor.

Belongs to the metallo-beta-lactamase superfamily. Zn(2+) serves as cofactor.

It catalyses the reaction atrochrysone carboxyl-[ACP] + H2O = atrochrysone carboxylate + holo-[ACP] + H(+). The protein operates within secondary metabolite biosynthesis. In terms of biological role, atrochrysone carboxyl ACP thioesterase; part of the gene cluster that mediates the biosynthesis of geodin, an intermediate in the biosynthesis of other natural products. The pathway begins with the synthesis of atrochrysone thioester by the polyketide synthase (PKS) gedC. The atrochrysone carboxyl ACP thioesterase gedB then breaks the thioester bond and releases the atrochrysone carboxylic acid from gedC. The atrochrysone carboxylic acid is then converted to atrochrysone which is further transformed into emodinanthrone. The next step is performed by the emodinanthrone oxygenase gedH that catalyzes the oxidation of emodinanthrone to emodin. Emodin O-methyltransferase encoded probably by gedA then catalyzes methylation of the 8-hydroxy group of emodin to form questin. Ring cleavage of questin by questin oxidase gedK leads to desmethylsulochrin via several intermediates including questin epoxide. Another methylation step probably catalyzed by methyltransferase gedG leads to the formation of sulochrin which is further converted to dihydrogeodin by the sulochrin halogenase gedL. Finally, the dihydrogeodin oxidase gedJ catalyzes the stereospecific phenol oxidative coupling reaction converting dihydrogeodin to geodin. The chain is Atrochrysone carboxyl ACP thioesterase from Aspergillus terreus (strain NIH 2624 / FGSC A1156).